A 302-amino-acid polypeptide reads, in one-letter code: Sulfate adenylyltransferase subunit 2 (302 aa).

The protein belongs to the PAPS reductase family. CysD subfamily. Heterodimer composed of CysD, the smaller subunit, and CysN.

It carries out the reaction sulfate + ATP + H(+) = adenosine 5'-phosphosulfate + diphosphate. It participates in sulfur metabolism; hydrogen sulfide biosynthesis; sulfite from sulfate: step 1/3. Its function is as follows. With CysN forms the ATP sulfurylase (ATPS) that catalyzes the adenylation of sulfate producing adenosine 5'-phosphosulfate (APS) and diphosphate, the first enzymatic step in sulfur assimilation pathway. APS synthesis involves the formation of a high-energy phosphoric-sulfuric acid anhydride bond driven by GTP hydrolysis by CysN coupled to ATP hydrolysis by CysD. The protein is Sulfate adenylyltransferase subunit 2 of Shewanella pealeana (strain ATCC 700345 / ANG-SQ1).